We begin with the raw amino-acid sequence, 2051 residues long: Autophagy-related protein 2 (2051 aa).

The region spanning 31 to 121 is the Chorein N-terminal domain; it reads QALDLDNLNF…QDEQTAKNKK (91 aa). Residues 108–117 are compositionally biased toward basic and acidic residues; the sequence is SKQEQDEQTA. Disordered regions lie at residues 108–129, 152–179, 297–331, 363–384, 419–466, and 501–564; these read SKQE…DGDE, RRLE…DDDG, SLVK…DMSI, DTQY…TPRA, RSEP…ADTE, and PGGW…DTST. Polar residues-rich tracts occupy residues 374 to 383 and 426 to 435; these read AGSSPLSTPR and PPTSFQPQTM. Low complexity predominate over residues 436 to 454; sequence PSGAVSPAPSEPSSSASSV.

The protein belongs to the ATG2 family.

The protein localises to the preautophagosomal structure membrane. It is found in the endoplasmic reticulum membrane. The catalysed reaction is a 1,2-diacyl-sn-glycero-3-phosphocholine(in) = a 1,2-diacyl-sn-glycero-3-phosphocholine(out). It catalyses the reaction a 1,2-diacyl-sn-glycero-3-phospho-L-serine(in) = a 1,2-diacyl-sn-glycero-3-phospho-L-serine(out). It carries out the reaction a 1,2-diacyl-sn-glycero-3-phosphoethanolamine(in) = a 1,2-diacyl-sn-glycero-3-phosphoethanolamine(out). In terms of biological role, lipid transfer protein required for autophagosome completion and peroxisome degradation. Tethers the edge of the isolation membrane (IM) to the endoplasmic reticulum (ER) and mediates direct lipid transfer from ER to IM for IM expansion. Atg-2 binds to the ER exit site (ERES), which is the membrane source for autophagosome formation, using basic residues in its N-terminal region (NR) and to the expanding edge of the IM through its C-terminal region. The latter binding is assisted by an atg-18-PtdIns3P interaction. Atg-2 then extracts phospholipids from the membrane source using its NR and transfers them to atg-9 to the IM through its predicted beta-sheet-rich structure for membrane expansion. This is Autophagy-related protein 2 (apg-2) from Neurospora crassa (strain ATCC 24698 / 74-OR23-1A / CBS 708.71 / DSM 1257 / FGSC 987).